Consider the following 422-residue polypeptide: Histidine--tRNA ligase (422 aa).

Belongs to the class-II aminoacyl-tRNA synthetase family. As to quaternary structure, homodimer.

The protein localises to the cytoplasm. It catalyses the reaction tRNA(His) + L-histidine + ATP = L-histidyl-tRNA(His) + AMP + diphosphate + H(+). This chain is Histidine--tRNA ligase, found in Vibrio atlanticus (strain LGP32) (Vibrio splendidus (strain Mel32)).